We begin with the raw amino-acid sequence, 460 residues long: A-type ATP synthase subunit B 1 (460 aa).

The protein belongs to the ATPase alpha/beta chains family. In terms of assembly, has multiple subunits with at least A(3), B(3), C, D, E, F, H, I and proteolipid K(x).

It localises to the cell membrane. In terms of biological role, component of the A-type ATP synthase that produces ATP from ADP in the presence of a proton gradient across the membrane. The B chain is a regulatory subunit. This Methanospirillum hungatei JF-1 (strain ATCC 27890 / DSM 864 / NBRC 100397 / JF-1) protein is A-type ATP synthase subunit B 1.